We begin with the raw amino-acid sequence, 309 residues long: uncharacterized protein (309 aa).

Pro residues-rich tracts occupy residues 1 to 17 (MTSRAPSPPTPPCPSPP) and 24 to 51 (SPVPTATPASPPLKPLSNPLPPPPPTPR). Disordered stretches follow at residues 1-174 (MTSR…PPGV) and 216-240 (PPDLPSPPLSPPLSPPLSPISPLHA). Positions 67-83 (LRSSPSSALNASRGAPS) are enriched in low complexity. Pro residues predominate over residues 84–112 (TSPPPSSSPPSSPASTPPSRTPSPTPTAP). 2 stretches are compositionally biased toward low complexity: residues 113 to 125 (ASPVASTAMTPAS) and 135 to 144 (APSSSAALSS). Pro residues predominate over residues 160-174 (PPPPLPPPLQPPPGV). A helical transmembrane segment spans residues 278–298 (LFLLFTLLSIHFSPFPIFILL).

It localises to the host membrane. This is an uncharacterized protein from Vitis vinifera (Grape).